The following is a 559-amino-acid chain: Potassium-transporting ATPase potassium-binding subunit (559 aa).

A run of 13 helical transmembrane segments spans residues Gly5–Ser25, Leu27–Trp47, Leu63–Trp83, Gly132–Ile152, Leu170–Ile190, Leu253–Ala273, Leu283–Val303, Phe327–Val347, Ala356–Val376, Gly379–Gly399, Met416–Met436, Leu484–Ala504, and Gly524–Ile544.

This sequence belongs to the KdpA family. The system is composed of three essential subunits: KdpA, KdpB and KdpC.

It localises to the cell inner membrane. Its function is as follows. Part of the high-affinity ATP-driven potassium transport (or Kdp) system, which catalyzes the hydrolysis of ATP coupled with the electrogenic transport of potassium into the cytoplasm. This subunit binds the periplasmic potassium ions and delivers the ions to the membrane domain of KdpB through an intramembrane tunnel. The sequence is that of Potassium-transporting ATPase potassium-binding subunit from Salmonella typhimurium (strain LT2 / SGSC1412 / ATCC 700720).